The sequence spans 273 residues: Outer surface protein A (273 aa).

An N-terminal signal peptide occupies residues 1–16 (MKKYLLGIGLILALIA). A lipid anchor (N-palmitoyl cysteine) is attached at Cys17. Residue Cys17 is the site of S-diacylglycerol cysteine attachment.

This sequence belongs to the OspA lipoprotein family.

Its subcellular location is the cell outer membrane. It is found in the cell surface. The chain is Outer surface protein A from Borreliella burgdorferi (strain N40) (Borrelia burgdorferi).